We begin with the raw amino-acid sequence, 104 residues long: Nucleoid-associated protein PEPE_1483 (104 aa).

A disordered region spans residues 1–35; sequence MRGGMGNMQSMMRQMQKMQKKVTEEQEKLNQTEFT. Over residues 8-17 the composition is skewed to low complexity; that stretch reads MQSMMRQMQK. The segment covering 21-30 has biased composition (basic and acidic residues); that stretch reads KVTEEQEKLN.

This sequence belongs to the YbaB/EbfC family. Homodimer.

The protein resides in the cytoplasm. It localises to the nucleoid. Binds to DNA and alters its conformation. May be involved in regulation of gene expression, nucleoid organization and DNA protection. The chain is Nucleoid-associated protein PEPE_1483 from Pediococcus pentosaceus (strain ATCC 25745 / CCUG 21536 / LMG 10740 / 183-1w).